A 359-amino-acid chain; its full sequence is MTYIPRQWIQVVDSHTGGEPTRLIYDGQHWPFAGSREGALTSQESPSPSVLSGLRKAIDRSSLILPKTMSERRQFLETEADWLRTASLLEPRGSDVLVGAILTPPEHASSQAGVVFCNNTGYLGMCGHGMIGVIVSLGQMGLIAPGPVTIDTPVGSIAATWSGSASVTLTNVWSYRYRHAVSLSVPGLGVVTGDIAWGGNWFFLIGEEVHQKSLDLGNLSDLLAYTSQIRSELGRQGIAGAQGAEIDHVELFASCDSSIADSQNFVLCPGGAYDRSPCGTGTSAKLACLVADGKVAEGGLWRQKSIVGSCFQAKALSIREGERGLEVLPQLTGEAYVTGVSTLQIDEADPFRWGILPPQ.

Catalysis depends on C126, which acts as the Proton acceptor. Residues 127–128 (GH), H248, and D274 each bind substrate. C278 functions as the Proton donor in the catalytic mechanism. 279 to 280 (GT) provides a ligand contact to substrate.

It belongs to the proline racemase family.

The enzyme catalyses trans-4-hydroxy-L-proline = cis-4-hydroxy-D-proline. Its function is as follows. Catalyzes the epimerization of trans-4-hydroxy-L-proline (t4LHyp) to cis-4-hydroxy-D-proline (c4DHyp). Is likely involved in a degradation pathway that converts t4LHyp to alpha-ketoglutarate. Displays no proline racemase activity. The chain is 4-hydroxyproline 2-epimerase from Planctopirus limnophila (strain ATCC 43296 / DSM 3776 / IFAM 1008 / Mu 290) (Planctomyces limnophilus).